A 284-amino-acid polypeptide reads, in one-letter code: Bifunctional protein FolD (284 aa).

NADP(+) is bound by residues 166 to 168 (GAS), serine 191, and isoleucine 232.

The protein belongs to the tetrahydrofolate dehydrogenase/cyclohydrolase family. Homodimer.

It catalyses the reaction (6R)-5,10-methylene-5,6,7,8-tetrahydrofolate + NADP(+) = (6R)-5,10-methenyltetrahydrofolate + NADPH. It carries out the reaction (6R)-5,10-methenyltetrahydrofolate + H2O = (6R)-10-formyltetrahydrofolate + H(+). The protein operates within one-carbon metabolism; tetrahydrofolate interconversion. Functionally, catalyzes the oxidation of 5,10-methylenetetrahydrofolate to 5,10-methenyltetrahydrofolate and then the hydrolysis of 5,10-methenyltetrahydrofolate to 10-formyltetrahydrofolate. The sequence is that of Bifunctional protein FolD from Neisseria gonorrhoeae (strain ATCC 700825 / FA 1090).